The following is a 242-amino-acid chain: Zinc import ATP-binding protein ZnuC (242 aa).

The ABC transporter domain maps to 24 to 241 (INVENLSFFY…EKFLKMFSSY (218 aa)). 56–63 (GPNGGGKT) contacts ATP.

It belongs to the ABC transporter superfamily. Zinc importer (TC 3.A.1.15.5) family. The complex is composed of two ATP-binding proteins (ZnuC), two transmembrane proteins (ZnuB) and a solute-binding protein (ZnuA).

It localises to the cell inner membrane. It catalyses the reaction Zn(2+)(out) + ATP(in) + H2O(in) = Zn(2+)(in) + ADP(in) + phosphate(in) + H(+)(in). Its function is as follows. Part of the ABC transporter complex ZnuABC involved in zinc import. Responsible for energy coupling to the transport system. In Ehrlichia chaffeensis (strain ATCC CRL-10679 / Arkansas), this protein is Zinc import ATP-binding protein ZnuC.